Consider the following 658-residue polypeptide: Cysteine-rich receptor-like protein kinase 36 (658 aa).

An N-terminal signal peptide occupies residues 1–26 (MERSNLFHIPCFLLLFLLFNINGVHT). Gnk2-homologous domains follow at residues 27–128 (TFVC…NIHR) and 139–246 (NVPH…DYRF). Residues 27 to 281 (TFVCGDEDFS…KKGRMFQPWS (255 aa)) lie on the Extracellular side of the membrane. Asn38, Asn64, Asn116, Asn150, and Asn163 each carry an N-linked (GlcNAc...) asparagine glycan. Residues 282–302 (VVVVVFPTGINLAVFVAFVLA) traverse the membrane as a helical segment. The Cytoplasmic segment spans residues 303-658 (YRRMRRRIYT…EVSITVLYPR (356 aa)). The Protein kinase domain occupies 340–612 (FSLENKLGQG…ITWLARDGTF (273 aa)). Residues 346 to 354 (LGQGGFGSV) and Lys368 contribute to the ATP site. Tyr413 bears the Phosphotyrosine mark. The active-site Proton acceptor is the Asp465. A Phosphoserine modification is found at Ser469. Thr505 is subject to Phosphothreonine. The residue at position 513 (Tyr513) is a Phosphotyrosine.

Belongs to the protein kinase superfamily. Ser/Thr protein kinase family. CRK subfamily. In terms of assembly, interacts with CRK45. In terms of processing, autophosphorylated.

The protein resides in the cell membrane. The catalysed reaction is L-seryl-[protein] + ATP = O-phospho-L-seryl-[protein] + ADP + H(+). It carries out the reaction L-threonyl-[protein] + ATP = O-phospho-L-threonyl-[protein] + ADP + H(+). Forms a complex with CRK45 that may negatively control abscisic acid (ABA) and osmotic stress signal transduction. Can phosphorylate CRK45 in vitro. This is Cysteine-rich receptor-like protein kinase 36 from Arabidopsis thaliana (Mouse-ear cress).